The following is a 228-amino-acid chain: Glucose-induced degradation protein 8-A homolog (228 aa).

The LisH domain occupies 25-57 (QRADMNRLIMNYLVTEGFKEAAEKFRMESGIEP). The 58-residue stretch at 63–120 (SLDERIKIREMVLKGQIQEAIALINSLHPELLDTNRYLYFHLQQQHLIELIRLRETEA) folds into the CTLH domain.

It belongs to the GID8 family. Identified in the CTLH complex that contains at least MAEA, RMND5A (or alternatively its paralog RMND5B), GID8, WDR26, and RANBP9 and/or RANBP10. Interacts with CTNNB1.

Functionally, core component of the CTLH E3 ubiquitin-protein ligase complex that selectively accepts ubiquitin from UBE2H and mediates ubiquitination and subsequent proteasomal degradation of target proteins. Acts as a positive regulator of Wnt signaling pathway by promoting beta-catenin (CTNNB1) nuclear accumulation. Required for normal Wnt signaling and normal dorsoventral patterning during embryogenesis. This chain is Glucose-induced degradation protein 8-A homolog (gid8a), found in Danio rerio (Zebrafish).